Consider the following 322-residue polypeptide: Altered inheritance of mitochondria protein 32 (322 aa).

The protein belongs to the AIM32 family.

The polypeptide is Altered inheritance of mitochondria protein 32 (AIM32) (Kluyveromyces lactis (strain ATCC 8585 / CBS 2359 / DSM 70799 / NBRC 1267 / NRRL Y-1140 / WM37) (Yeast)).